We begin with the raw amino-acid sequence, 31 residues long: Photosystem II reaction center protein T (31 aa).

A helical transmembrane segment spans residues 3 to 23; that stretch reads AFSYVLILTLALVTLFFAVAF.

This sequence belongs to the PsbT family. In terms of assembly, PSII is composed of 1 copy each of membrane proteins PsbA, PsbB, PsbC, PsbD, PsbE, PsbF, PsbH, PsbI, PsbJ, PsbK, PsbL, PsbM, PsbT, PsbX, PsbY, Psb30/Ycf12, peripheral proteins PsbO, CyanoQ (PsbQ), PsbU, PsbV and a large number of cofactors. It forms dimeric complexes.

It is found in the cellular thylakoid membrane. Found at the monomer-monomer interface of the photosystem II (PS II) dimer, plays a role in assembly and dimerization of PSII. PSII is a light-driven water plastoquinone oxidoreductase, using light energy to abstract electrons from H(2)O, generating a proton gradient subsequently used for ATP formation. This is Photosystem II reaction center protein T from Prochlorococcus marinus (strain NATL2A).